Here is an 871-residue protein sequence, read N- to C-terminus: Transient receptor potential cation channel subfamily V member 4 (871 aa).

Disordered regions lie at residues 1–68 (MADP…PNLR) and 110–143 (YGTYRHHPSDNKRWRRKVVEKQPQSPKAPAPQPP). Topologically, residues 1 to 469 (MADPGDGPRA…RDKWRKFGAV (469 aa)) are cytoplasmic. At tyrosine 110 the chain carries Phosphotyrosine. Positions 116–129 (HPSDNKRWRRKVVE) are enriched in basic and acidic residues. ATP contacts are provided by residues lysine 192, lysine 197, asparagine 201, 236–239 (YRGQ), and arginine 248. 2 ANK repeats span residues 237–266 (RGQTALHIAIERRCKHYVELLVAQGADVHA) and 284–313 (FGELPLSLAACTNQPHIVNYLTENPHKKAD). 249–251 (RCK) contributes to the a 1,2-diacyl-sn-glycero-3-phospho-(1D-myo-inositol-4,5-bisphosphate) binding site. Tyrosine 253 bears the Phosphotyrosine mark. A 1,2-diacyl-sn-glycero-3-phospho-(1D-myo-inositol-4,5-bisphosphate) is bound by residues 296 to 299 (NQPH) and lysine 344. The ANK 3 repeat unit spans residues 369–398 (DGLSPLMMAAKTGKIGVFQHIIRREVTDED). A helical membrane pass occupies residues 470–490 (SFYINVVSYLCAMVIFTLTAY). Residues 491 to 507 (YQPLEGTPPYPYRTTVD) lie on the Extracellular side of the membrane. A helical membrane pass occupies residues 508–534 (YLRLAGEVITLLTGVLFFFTSIKDLFM). Residues 535–547 (KKCPGVNSLFVDG) lie on the Cytoplasmic side of the membrane. The chain crosses the membrane as a helical span at residues 548–568 (SFQLLYFIYSVLVVVSAALYL). The Extracellular portion of the chain corresponds to 569-572 (AGIE). Residues 573 to 593 (AYLAVMVFALVLGWMNALYFT) form a helical membrane-spanning segment. Residues 594-608 (RGLKLTGTYSIMIQK) lie on the Cytoplasmic side of the membrane. The chain crosses the membrane as a helical span at residues 609–636 (ILFKDLFRFLLVYLLFMIGYASALVTLL). The Extracellular segment spans residues 637 to 665 (NPCTNMKVCNEDQSNCTVPSYPACRDSET). The pore-forming intramembrane region spans 666–685 (FSAFLLDLFKLTIGMGDLEM). The Selectivity filter signature appears at 679 to 682 (GMGD). Aspartate 682 is a binding site for Ca(2+). Over 686–693 (LSSAKYPV) the chain is Extracellular. A helical transmembrane segment spans residues 694–722 (VFILLLVTYIILTFVLLLNMLIALMGETV). Topologically, residues 723 to 871 (GQVSKESKHI…PKWRAEDAPL (149 aa)) are cytoplasmic. Residue tyrosine 805 is modified to Phosphotyrosine. The interaction with calmodulin and ITPR3 stretch occupies residues 812–831 (HTMGRLRRDRWSSVVPRVVE). Serine 824 bears the Phosphoserine mark.

This sequence belongs to the transient receptor (TC 1.A.4) family. TrpV subfamily. TRPV4 sub-subfamily. As to quaternary structure, homotetramer. Interacts with calmodulin. Interacts with MAP7 and Src family Tyr protein kinases LYN, SRC, FYN, HCK, LCK and YES. Interacts with CTNNB1. The TRPV4 and CTNNB1 complex can interact with CDH1. Part of a complex containing MLC1, AQP4, HEPACAM and ATP1B1. Interacts with PACSIN1, PACSIN2 and PACSIN3 (via SH3 domain). Interacts with ITPR3. Interacts with AQP5; the interaction is probably indirect and regulates TRPV4 activation by hypotonicity. Interacts with ANO1. Interacts (via C-terminus) with PKD2 (via C-terminus). Interacts with DDX3X; this interaction is decreased when the channel is activated. N-glycosylated. In terms of tissue distribution, expressed lung, spleen, kidney, testis, fat, and at very low levels in trigeminal ganglia.

It is found in the cell membrane. It localises to the apical cell membrane. Its subcellular location is the cell junction. The protein localises to the adherens junction. The protein resides in the cell projection. It is found in the cilium. The enzyme catalyses Ca(2+)(in) = Ca(2+)(out). In terms of biological role, non-selective calcium permeant cation channel involved in osmotic sensitivity and mechanosensitivity. Activation by exposure to hypotonicity within the physiological range exhibits an outward rectification. Also activated by heat, low pH, citrate and phorbol esters. Increase of intracellular Ca(2+) potentiates currents. Channel activity seems to be regulated by a calmodulin-dependent mechanism with a negative feedback mechanism. Acts as a regulator of intracellular Ca(2+) in synoviocytes. Plays an obligatory role as a molecular component in the nonselective cation channel activation induced by 4-alpha-phorbol 12,13-didecanoate and hypotonic stimulation in synoviocytes and also regulates production of IL-8. Together with PKD2, forms mechano- and thermosensitive channels in cilium. Promotes cell-cell junction formation in skin keratinocytes and plays an important role in the formation and/or maintenance of functional intercellular barriers. Negatively regulates expression of PPARGC1A, UCP1, oxidative metabolism and respiration in adipocytes. Regulates expression of chemokines and cytokines related to pro-inflammatory pathway in adipocytes. Together with AQP5, controls regulatory volume decrease in salivary epithelial cells. Required for normal development and maintenance of bone and cartilage. In its inactive state, may sequester DDX3X at the plasma membrane. When activated, the interaction between both proteins is affected and DDX3X relocalizes to the nucleus. In neurons of the central nervous system, could play a role in triggering voluntary water intake in response to increased sodium concentration in body fluid. The protein is Transient receptor potential cation channel subfamily V member 4 (Trpv4) of Rattus norvegicus (Rat).